Reading from the N-terminus, the 219-residue chain is Occludin/ELL domain-containing protein 1 (219 aa).

The segment at 1–110 (MQIHAGPASR…DYELKYPPVT (110 aa)) is disordered. The span at 17-43 (LARLSGPEATCNSRPAARGRQRAAAPR) shows a compositional bias: low complexity. Positions 72–93 (VFADELRPREPLHPEKHPRDLG) are enriched in basic and acidic residues. The OCEL domain occupies 100–210 (PDYELKYPPV…QIRKFDDQQD (111 aa)).

This sequence belongs to the ELL/occludin family.

This chain is Occludin/ELL domain-containing protein 1 (Ocel1), found in Mus musculus (Mouse).